The sequence spans 147 residues: Transcriptional regulator MraZ (147 aa).

2 consecutive SpoVT-AbrB domains span residues 5 to 51 (GTPV…PQPV) and 80 to 123 (ACDV…DSEK).

This sequence belongs to the MraZ family. In terms of assembly, forms oligomers.

The protein resides in the cytoplasm. Its subcellular location is the nucleoid. In Nitrosospira multiformis (strain ATCC 25196 / NCIMB 11849 / C 71), this protein is Transcriptional regulator MraZ.